Reading from the N-terminus, the 489-residue chain is Betaine aldehyde dehydrogenase (489 aa).

2 residues coordinate K(+): T26 and D93. NAD(+) is bound at residue 150–152 (GAW). The Charge relay system role is filled by K162. Position 176–179 (176–179 (KPSE)) interacts with NAD(+). V180 contributes to the K(+) binding site. 229–232 (GVET) contributes to the NAD(+) binding site. Residue L245 coordinates K(+). E251 functions as the Proton acceptor in the catalytic mechanism. The NAD(+) site is built by G253, C285, and E386. C285 (nucleophile) is an active-site residue. At C285 the chain carries Cysteine sulfenic acid (-SOH). The K(+) site is built by K456 and G459. E463 serves as the catalytic Charge relay system.

This sequence belongs to the aldehyde dehydrogenase family. As to quaternary structure, dimer of dimers. The cofactor is K(+).

It catalyses the reaction betaine aldehyde + NAD(+) + H2O = glycine betaine + NADH + 2 H(+). It participates in amine and polyamine biosynthesis; betaine biosynthesis via choline pathway; betaine from betaine aldehyde: step 1/1. Functionally, involved in the biosynthesis of the osmoprotectant glycine betaine. Catalyzes the irreversible oxidation of betaine aldehyde to the corresponding acid. In Burkholderia orbicola (strain AU 1054), this protein is Betaine aldehyde dehydrogenase.